Consider the following 233-residue polypeptide: Thymidylate kinase (233 aa).

10–17 provides a ligand contact to ATP; sequence GVDGVGKT.

Belongs to the thymidylate kinase family.

It catalyses the reaction dTMP + ATP = dTDP + ADP. Its function is as follows. Phosphorylation of dTMP to form dTDP in both de novo and salvage pathways of dTTP synthesis. In Bifidobacterium longum subsp. infantis (strain ATCC 15697 / DSM 20088 / JCM 1222 / NCTC 11817 / S12), this protein is Thymidylate kinase.